We begin with the raw amino-acid sequence, 720 residues long: Engulfment and cell motility protein 2 (720 aa).

At Y48 the chain carries Phosphotyrosine. One can recognise an ELMO domain in the interval 311 to 485 (AQRDIIFELR…VVREQITRAL (175 aa)). S503 is modified (phosphoserine). One can recognise a PH domain in the interval 553 to 674 (SSFRKIGNRR…LLGKDMSSEL (122 aa)). Positions 700–707 (PEAPPPIP) match the SH3-binding motif. Residue Y717 is modified to Phosphotyrosine.

As to quaternary structure, interacts with the SH3-domain of DOCK1 via its SH3-binding site. Probably part of a complex with DOCK1 and RAC1. Probably part of a complex with DOCK1 and CRK isoform CRK-II. Interacts with ARHGEF16, DOCK4 and EPHA2; mediates activation of RAC1 by EPHA2. Interacts with ADGRB3. Interacts with AUTS2; the interaction is direct. Widely expressed, with a higher expression in skeletal muscle, kidney and placenta.

The protein resides in the cytoplasm. It localises to the cytosol. It is found in the membrane. Its function is as follows. Involved in cytoskeletal rearrangements required for phagocytosis of apoptotic cells and cell motility. Acts in association with DOCK1 and CRK. Was initially proposed to be required in complex with DOCK1 to activate Rac Rho small GTPases. May enhance the guanine nucleotide exchange factor (GEF) activity of DOCK1. In Homo sapiens (Human), this protein is Engulfment and cell motility protein 2 (ELMO2).